A 428-amino-acid chain; its full sequence is 3-phosphoshikimate 1-carboxyvinyltransferase (428 aa).

Positions 19, 20, and 24 each coordinate 3-phosphoshikimate. Lysine 19 contributes to the phosphoenolpyruvate binding site. Residues glycine 91 and arginine 119 each contribute to the phosphoenolpyruvate site. 3-phosphoshikimate contacts are provided by serine 164, glutamine 166, aspartate 312, and lysine 339. Glutamine 166 serves as a coordination point for phosphoenolpyruvate. Aspartate 312 acts as the Proton acceptor in catalysis. Arginine 343 and arginine 386 together coordinate phosphoenolpyruvate.

Belongs to the EPSP synthase family. In terms of assembly, monomer.

The protein localises to the cytoplasm. The enzyme catalyses 3-phosphoshikimate + phosphoenolpyruvate = 5-O-(1-carboxyvinyl)-3-phosphoshikimate + phosphate. It participates in metabolic intermediate biosynthesis; chorismate biosynthesis; chorismate from D-erythrose 4-phosphate and phosphoenolpyruvate: step 6/7. In terms of biological role, catalyzes the transfer of the enolpyruvyl moiety of phosphoenolpyruvate (PEP) to the 5-hydroxyl of shikimate-3-phosphate (S3P) to produce enolpyruvyl shikimate-3-phosphate and inorganic phosphate. The chain is 3-phosphoshikimate 1-carboxyvinyltransferase from Bacillus licheniformis (strain ATCC 14580 / DSM 13 / JCM 2505 / CCUG 7422 / NBRC 12200 / NCIMB 9375 / NCTC 10341 / NRRL NRS-1264 / Gibson 46).